A 342-amino-acid polypeptide reads, in one-letter code: Aldo-keto reductase pigE (342 aa).

The N-terminal stretch at 1 to 27 is a signal peptide; it reads MGSISPKTRFPIVLGAGLIGSPGLFEG. NADP(+) is bound at residue Asp52. Residue Tyr57 is the Proton donor of the active site. Residues Gln182 and Arg236 each contribute to the NADP(+) site. Asn271 is a glycosylation site (N-linked (GlcNAc...) asparagine).

It belongs to the aldo/keto reductase family. Aldo/keto reductase 2 subfamily.

It participates in secondary metabolite biosynthesis. In terms of biological role, aldo-keto reductase; part of the gene cluster that mediates the biosynthesis of azaphilone pigments (MonAzPs), a complex mixture of compounds with a common azaphilone skeleton very widely used as food colorants. Within the pathway, pigE is involved in the dehydration of the C-11 alcohol followed by the reduction of the C6(7) double bond which increases the electrophilicity of the C-5 ketone of the resulting acyl benzopyran and allows the intramolecular Knoevenagel aldol condensation with the C-20 enol of the side chain to yield the characteristic linear tricyclic carbon skeletons of the yellow pigments. The first step of the pathway is performed by the nrPKS pigA that forms the hexaketide precursor from successive condensations of five malonyl-CoA units, with a simple acetyl-CoA starter unit. The role of esterase pigG is not clear, but it may play at most a supplementary role in the formation of the benzaldehyde produced by the pigA nrPKS. This very reactive benzaldehyde is intercepted by the pigC ketoreductase that to provide the first stable enzyme-free MonAzPs intermediate, 6-(4-hydroxy-2-oxopentyl)-3-methyl-2,4-dioxocyclohexane carbaldehyde, also known as M7PKS-1. The FAD-dependent monooxygenase pigN hydroxylates M7PKS-1 at C-4, which triggers the formation of the pyran ring. PigJ, pigK and pigD are involved in the acetylation of the pyran ring. PigJ and pigK form the two subunits of a dedicated fungal FAS that produces the side chain fatty acyl moiety of MonAzPs and pigD transfers the fatty acyl chain to the C-4 alcohol. PigM and pigO are involved in the elimination of the omega-1 alcohol. PigM acts as an O-acetyltransferase that synthesizes the putative O-11 acetyl intermediate whereas pigO eliminates acetic acid to yield an intermediate with a C10(11) double bond. The dehydration of the C-11 alcohol followed by the reduction of the C6(7) double bond by the NAD(P)H-dependent oxidoreductase pigE increases the electrophilicity of the C-5 ketone of the resulting acyl benzopyran. This in turn sets up the C-5 ketone for an intramolecular Knoevenagel aldol condensation with the C-20 enol of the side chain. This condensation affords the characteristic linear tricyclic carbon skeletons of the yellow pigments that serve as the common precursors for the classical yellow pigments monascin and ankaflavin, orange pigments rubopunctatin and monascorubrin, and red pigments ribropunctamine and monascorubramine. The FAD-dependent oxidoreductase pigF is especially invoved in the biosynthesis of orange and red pigments via desaturation of C6(7). This chain is Aldo-keto reductase pigE, found in Monascus ruber (Mold).